A 198-amino-acid chain; its full sequence is Probable GTP-binding protein EngB (198 aa).

The region spanning 21 to 195 (NIPEVCFVGR…YDALIRLLEV (175 aa)) is the EngB-type G domain. Residues 29–36 (GRSNVGKS), 56–60 (GKTRL), 75–78 (DAPG), 142–145 (TKLD), and 174–176 (VSN) contribute to the GTP site. Mg(2+) contacts are provided by Ser-36 and Thr-58.

Belongs to the TRAFAC class TrmE-Era-EngA-EngB-Septin-like GTPase superfamily. EngB GTPase family. The cofactor is Mg(2+).

Its function is as follows. Necessary for normal cell division and for the maintenance of normal septation. The protein is Probable GTP-binding protein EngB of Mesoplasma florum (strain ATCC 33453 / NBRC 100688 / NCTC 11704 / L1) (Acholeplasma florum).